The sequence spans 452 residues: Keratin, type I cytoskeletal 42 (452 aa).

The tract at residues 4–93 is head; sequence TTSIRQFSTS…GVSDALLGGS (90 aa). Coiled-coil stretches lie at residues 93-132 and 188-407; these read SEKETMQNLNDRLATYLDRVRALEEANTDLEVKIREWYKK and NLRM…HLAT. A coil 1A region spans residues 94–129; it reads EKETMQNLNDRLATYLDRVRALEEANTDLEVKIREW. One can recognise an IF rod domain in the interval 94 to 405; the sequence is EKETMQNLND…RLLEGEDAHL (312 aa). The segment at 130-147 is linker 1; sequence YKKQGPGPARDYSPYFKT. The segment at 148–239 is coil 1B; the sequence is IEDLRNKILA…KNHEEEMNAL (92 aa). The tract at residues 240–262 is linker 12; that stretch reads RGQVGGDVNVEMDAAPGVDLSRI. The segment at 263–401 is coil 2; sequence LNEMRDQYEK…ATYRRLLEGE (139 aa). The tract at residues 402-452 is tail; that stretch reads DAHLATQYSSSLASQASREGTVTSRQVRTIVEEVQDGKVVSSREQVHRSTH.

This sequence belongs to the intermediate filament family. In terms of assembly, heterodimer of a type I and a type II keratin. Colocalizes with KRT8/KRT18 filament network.

The protein localises to the cytoplasm. This is Keratin, type I cytoskeletal 42 from Rattus norvegicus (Rat).